The sequence spans 293 residues: Probable endonuclease 4 (293 aa).

Residues His-77, His-118, Glu-153, Asp-187, His-190, His-221, Asp-234, His-236, and Glu-266 each coordinate Zn(2+).

It belongs to the AP endonuclease 2 family. Zn(2+) serves as cofactor.

The enzyme catalyses Endonucleolytic cleavage to 5'-phosphooligonucleotide end-products.. Functionally, endonuclease IV plays a role in DNA repair. It cleaves phosphodiester bonds at apurinic or apyrimidinic (AP) sites, generating a 3'-hydroxyl group and a 5'-terminal sugar phosphate. This chain is Probable endonuclease 4, found in Mesoplasma florum (strain ATCC 33453 / NBRC 100688 / NCTC 11704 / L1) (Acholeplasma florum).